The primary structure comprises 372 residues: Anhydro-N-acetylmuramic acid kinase (372 aa).

Gly18–Asp25 is an ATP binding site.

The protein belongs to the anhydro-N-acetylmuramic acid kinase family.

It catalyses the reaction 1,6-anhydro-N-acetyl-beta-muramate + ATP + H2O = N-acetyl-D-muramate 6-phosphate + ADP + H(+). Its pathway is amino-sugar metabolism; 1,6-anhydro-N-acetylmuramate degradation. The protein operates within cell wall biogenesis; peptidoglycan recycling. Its function is as follows. Catalyzes the specific phosphorylation of 1,6-anhydro-N-acetylmuramic acid (anhMurNAc) with the simultaneous cleavage of the 1,6-anhydro ring, generating MurNAc-6-P. Is required for the utilization of anhMurNAc either imported from the medium or derived from its own cell wall murein, and thus plays a role in cell wall recycling. The sequence is that of Anhydro-N-acetylmuramic acid kinase from Thiobacillus denitrificans (strain ATCC 25259 / T1).